The sequence spans 376 residues: MEQKQRRFTKNVFVLDQKRKTICGQIAARQSLPYCQIKIGRNFALRAVATPEPKGYVLEICDVGAYRIQDGNDVISLMISADGVEGTQERWEEWKFESDLMRTNGHSSKYKRSVGRREIKVSKGMGIVPPYTRNDFDRRELPELPGVQRSKYDIRELRQKIREEREKGAVEQPHKPAFKTERGMNRPDSDEDQNPAGGVVNDWTCETQKRDQEAERREALEIRLADNDRESKHSNWIVRGRGKILKEVKNSFRTQEVERKKSDMGEVIIEEDDEDSEEEEGARASYITSAYIERISRIRKIKDERLSMLASMMPQQSGEYTTTLFIKKQKWDNVPLYLIDEMQKKYELQSVGSCERVAFVSKGTNLIILPVASNPR.

The segment covering 163–188 (EEREKGAVEQPHKPAFKTERGMNRPD) has biased composition (basic and acidic residues). Residues 163-201 (EEREKGAVEQPHKPAFKTERGMNRPDSDEDQNPAGGVVN) form a disordered region.

Belongs to the orbivirus non-structural protein NS2 family.

Its function is as follows. Single-stranded RNA-binding protein. This Antilocapra americana (Pronghorn) protein is Non-structural protein NS2 (Segment-8).